An 82-amino-acid polypeptide reads, in one-letter code: Acyl carrier protein (82 aa).

The Carrier domain maps to 2 to 77 (DNVADRVKKV…QAIDYVSAHI (76 aa)). Serine 37 is modified (O-(pantetheine 4'-phosphoryl)serine).

The protein belongs to the acyl carrier protein (ACP) family. Post-translationally, 4'-phosphopantetheine is transferred from CoA to a specific serine of apo-ACP by AcpS. This modification is essential for activity because fatty acids are bound in thioester linkage to the sulfhydryl of the prosthetic group.

It is found in the cytoplasm. It functions in the pathway lipid metabolism; fatty acid biosynthesis. Carrier of the growing fatty acid chain in fatty acid biosynthesis. The chain is Acyl carrier protein from Acidithiobacillus ferrooxidans (strain ATCC 23270 / DSM 14882 / CIP 104768 / NCIMB 8455) (Ferrobacillus ferrooxidans (strain ATCC 23270)).